Here is a 748-residue protein sequence, read N- to C-terminus: WD repeat-containing protein 91 (748 aa).

A coiled-coil region spans residues 183–228 (QRTNQVQEENEVLRQKLFALQAEIHRLKKEEQQQEEEAAALVQHKL). Ser257 bears the Phosphoserine mark. The span at 266–279 (LLPQSKKSPSRLSP) shows a compositional bias: low complexity. The disordered stretch occupies residues 266–368 (LLPQSKKSPS…PEVSGAEAEP (103 aa)). Positions 284 to 300 (PQAQSSAKKDSFSSQAT) are enriched in polar residues. Phosphoserine occurs at positions 289 and 294. Residues 333-344 (RLQDHGKERREL) show a composition bias toward basic and acidic residues. Polar residues predominate over residues 345–354 (LSTSSSQSQC). 7 WD repeats span residues 407-446 (EHHS…QTKA), 449-489 (ISKS…NLCE), 512-556 (VCSA…QQLQ), 561-600 (PEPI…CAMS), 603-642 (AHCG…LKVS), 665-703 (VQVP…KVLE), and 710-748 (GHRA…AHKL).

Belongs to the WD repeat WDR91 family. As to quaternary structure, interacts with WDR81; involved in early to late endosome cargo transport. Interacts with BECN1; negatively regulates the PI3 kinase/PI3K activity associated with endosomal membranes.

The protein localises to the early endosome membrane. Its subcellular location is the late endosome membrane. In terms of biological role, functions as a negative regulator of the PI3 kinase/PI3K activity associated with endosomal membranes via BECN1, a core subunit of the PI3K complex. By modifying the phosphatidylinositol 3-phosphate/PtdInsP3 content of endosomal membranes may regulate endosome fusion, recycling, sorting and early to late endosome transport. It is for instance, required for the delivery of cargos like BST2/tetherin from early to late endosome and thereby participates indirectly to their degradation by the lysosome. May play a role in meiosis. This is WD repeat-containing protein 91 from Mus musculus (Mouse).